The chain runs to 146 residues: Large ribosomal subunit protein uL15 (146 aa).

The interval 1-64 is disordered; that stretch reads MQLNTIKPAI…MPMHRRLPKR (64 aa). The span at 30–39 shows a compositional bias: basic residues; sequence TATKGHKGQK.

Belongs to the universal ribosomal protein uL15 family. In terms of assembly, part of the 50S ribosomal subunit.

In terms of biological role, binds to the 23S rRNA. The protein is Large ribosomal subunit protein uL15 of Geobacter sp. (strain M21).